The sequence spans 707 residues: Ornithine decarboxylase (707 aa).

Residues 83 to 102 form a disordered region; it reads NRNPLSRADSAAGREETAQT. At Lys288 the chain carries N6-(pyridoxal phosphate)lysine. Residues Ser421, Gly458, and 498–501 each bind pyridoxal 5'-phosphate; that span reads EPGR. Residue 561–562 coordinates substrate; sequence FD. Residue Cys634 is the Proton donor; shared with dimeric partner of the active site. Asp635 contacts substrate. Residue Tyr663 participates in pyridoxal 5'-phosphate binding.

The protein belongs to the Orn/Lys/Arg decarboxylase class-II family. In terms of assembly, homodimer. Only the dimer is catalytically active, as the active sites are constructed of residues from both monomers. The cofactor is pyridoxal 5'-phosphate.

It carries out the reaction L-ornithine + H(+) = putrescine + CO2. The protein operates within amine and polyamine biosynthesis; putrescine biosynthesis via L-ornithine pathway; putrescine from L-ornithine: step 1/1. Its activity is regulated as follows. Inhibited by antizyme (AZ) in response to polyamine levels. AZ inhibits the assembly of the functional homodimer by binding to ODC monomers and targeting them for ubiquitin-independent proteolytic destruction by the 26S proteasome. Inhibited by 1-amino-oxy-3-aminopropane (APA, an isosteric analog of putrescine). Irreversibly inhibited by alpha-difluoromethylornithine (DFMO, a curative agent of West African sleeping sickness). Functionally, catalyzes the first and rate-limiting step of polyamine biosynthesis that converts ornithine into putrescine, which is the precursor for the polyamines, spermidine and spermine. Polyamines are essential for cell proliferation and are implicated in cellular processes, ranging from DNA replication to apoptosis. The protein is Ornithine decarboxylase of Leishmania donovani.